Reading from the N-terminus, the 391-residue chain is Phosphoglycerate kinase (391 aa).

Substrate contacts are provided by residues 21–23 (DLN), arginine 36, 59–62 (HLGR), arginine 114, and arginine 147. ATP-binding positions include lysine 198, glutamate 315, and 344–347 (GGDT).

The protein belongs to the phosphoglycerate kinase family. As to quaternary structure, monomer.

It is found in the cytoplasm. It catalyses the reaction (2R)-3-phosphoglycerate + ATP = (2R)-3-phospho-glyceroyl phosphate + ADP. Its pathway is carbohydrate degradation; glycolysis; pyruvate from D-glyceraldehyde 3-phosphate: step 2/5. The polypeptide is Phosphoglycerate kinase (Haemophilus ducreyi (strain 35000HP / ATCC 700724)).